Reading from the N-terminus, the 494-residue chain is MTAAATANVVTLPASEPAKAVRDTRPLRLITCGSVDDGKSTLIGRLLWDTKAVKEDQAATLQRDSTGKQNDLGLPDFALLLDGLQAEREQGITIDVAYRYFSTDKRSFIVADTPGHEQYTRNMATGASTADLAVLLVDARMGILEQTRRHATIASLLGIKQFVLAINKIDLTNYDRAGFEKISHDFREFALSLGVKQITAIPMSALKGENVVYSGQAAMPWYTGPTLVETLELATVRSAQAVGFRLSVQRVSRPGESFRGYQGTVAGGSVKPGDSVMILPSGMVANVSKIVTFDLVRNAAVAGDAITLVLDRQVDVSRGDMIVAIDSQPQSGLSFDAQIVALQPEGIEPGKRYWLKSGSRRQRVQVQPIAQLELKTGAWAPAQSLWMNAIGKVRLSFDEAAVFDPYDQNRSTGSFILIDPESNNTVAGGMITGKRADLGGIHKDGQRVLLSLPADLADQIMASELFSSRRDETEVRRVTAAQAAEIWANAASDI.

The 217-residue stretch at 24–240 folds into the tr-type G domain; it reads TRPLRLITCG…LELATVRSAQ (217 aa). The tract at residues 33 to 40 is G1; that stretch reads GSVDDGKS. A GTP-binding site is contributed by 33–40; it reads GSVDDGKS. The segment at 91–95 is G2; the sequence is GITID. Residues 112–115 form a G3 region; sequence DTPG. GTP-binding positions include 112 to 116 and 167 to 170; these read DTPGH and NKID. A G4 region spans residues 167–170; sequence NKID. A G5 region spans residues 204-206; sequence SAL.

This sequence belongs to the TRAFAC class translation factor GTPase superfamily. Classic translation factor GTPase family. CysN/NodQ subfamily. Heterodimer composed of CysD, the smaller subunit, and CysN.

It carries out the reaction sulfate + ATP + H(+) = adenosine 5'-phosphosulfate + diphosphate. It functions in the pathway sulfur metabolism; hydrogen sulfide biosynthesis; sulfite from sulfate: step 1/3. In terms of biological role, with CysD forms the ATP sulfurylase (ATPS) that catalyzes the adenylation of sulfate producing adenosine 5'-phosphosulfate (APS) and diphosphate, the first enzymatic step in sulfur assimilation pathway. APS synthesis involves the formation of a high-energy phosphoric-sulfuric acid anhydride bond driven by GTP hydrolysis by CysN coupled to ATP hydrolysis by CysD. The polypeptide is Sulfate adenylyltransferase subunit 1 (Rhizobium tropici).